A 361-amino-acid polypeptide reads, in one-letter code: tRNA/tmRNA (uracil-C(5))-methyltransferase (361 aa).

S-adenosyl-L-methionine-binding residues include Q183, Y211, N216, E232, and D294. Catalysis depends on C319, which acts as the Nucleophile. Catalysis depends on E353, which acts as the Proton acceptor.

It belongs to the class I-like SAM-binding methyltransferase superfamily. RNA M5U methyltransferase family. TrmA subfamily.

It carries out the reaction uridine(54) in tRNA + S-adenosyl-L-methionine = 5-methyluridine(54) in tRNA + S-adenosyl-L-homocysteine + H(+). It catalyses the reaction uridine(341) in tmRNA + S-adenosyl-L-methionine = 5-methyluridine(341) in tmRNA + S-adenosyl-L-homocysteine + H(+). Functionally, dual-specificity methyltransferase that catalyzes the formation of 5-methyluridine at position 54 (m5U54) in all tRNAs, and that of position 341 (m5U341) in tmRNA (transfer-mRNA). The sequence is that of tRNA/tmRNA (uracil-C(5))-methyltransferase from Acinetobacter baylyi (strain ATCC 33305 / BD413 / ADP1).